A 130-amino-acid polypeptide reads, in one-letter code: Large ribosomal subunit protein eL32 (130 aa).

Belongs to the eukaryotic ribosomal protein eL32 family.

The sequence is that of Large ribosomal subunit protein eL32 (rpl32e) from Pyrococcus abyssi (strain GE5 / Orsay).